A 359-amino-acid chain; its full sequence is MLELNFSQQLGDLHLQVATDLPAQGITAIFGLSGAGKTSLINVIGGLTRPQQGRVILNGRVLVDAEKNIYLPPEKRRVGYVFQDARLFPHYRVRGNLQYGMAASMRGQFDAIVGLLGIEPLLNRFPFTLSGGEKQRVAIGRALLTAPELLLMDEPLASLDLPRKRELLPYLERLAQDVNTPILYVSHSMDEILRLADQVVVMDAGKVRAVGGLEEVWASSALRPWLQREEPSSILRVSVIGHHDRYAMTALALGDQRLWVGKLDAAEGNSMRIRINAADVSLALQPPHSSSIRNILPVKVAECLDVDGQVDVKLAIGEQWLWARITPWARDELGLKPGQWVYAQIKSVSFNRQNGPVPD.

Positions methionine 1 to glutamate 229 constitute an ABC transporter domain. Glycine 31 to threonine 38 lines the ATP pocket. The Mop domain maps to serine 289–asparagine 354.

Belongs to the ABC transporter superfamily. Molybdate importer (TC 3.A.1.8) family. The complex is composed of two ATP-binding proteins (ModC), two transmembrane proteins (ModB) and a solute-binding protein (ModA).

The protein localises to the cell inner membrane. It carries out the reaction molybdate(out) + ATP + H2O = molybdate(in) + ADP + phosphate + H(+). Functionally, part of the ABC transporter complex ModABC involved in molybdenum import. Responsible for energy coupling to the transport system. This is Molybdenum import ATP-binding protein ModC from Yersinia pestis bv. Antiqua (strain Antiqua).